The sequence spans 237 residues: Cyclic-di-GMP-binding biofilm dispersal mediator protein (237 aa).

10–34 (LILGGSRGIGAAIVRRFVTDGANVR) is a binding site for NAD(+). Residue S132 coordinates substrate. Catalysis depends on Y146, which acts as the Proton acceptor.

Belongs to the short-chain dehydrogenases/reductases (SDR) family.

Functionally, increases biofilm dispersal. Acts by binding directly to the signaling molecule cyclic-di-GMP, which decreases the intracellular concentration of cyclic-di-GMP and leads to biofilm dispersal. Also controls other biofilm-related phenotypes such as cell motility, cell size, cell aggregation and production of extracellular DNA and extracellular polysaccharides (EPS). Does not act as a phosphodiesterase. The chain is Cyclic-di-GMP-binding biofilm dispersal mediator protein (bdcA) from Escherichia coli (strain K12).